Here is a 151-residue protein sequence, read N- to C-terminus: ATP synthase subunit b' (151 aa).

A helical membrane pass occupies residues T18–F38.

This sequence belongs to the ATPase B chain family. As to quaternary structure, F-type ATPases have 2 components, F(1) - the catalytic core - and F(0) - the membrane proton channel. F(1) has five subunits: alpha(3), beta(3), gamma(1), delta(1), epsilon(1). F(0) has four main subunits: a(1), b(1), b'(1) and c(10-14). The alpha and beta chains form an alternating ring which encloses part of the gamma chain. F(1) is attached to F(0) by a central stalk formed by the gamma and epsilon chains, while a peripheral stalk is formed by the delta, b and b' chains.

Its subcellular location is the cellular thylakoid membrane. In terms of biological role, f(1)F(0) ATP synthase produces ATP from ADP in the presence of a proton or sodium gradient. F-type ATPases consist of two structural domains, F(1) containing the extramembraneous catalytic core and F(0) containing the membrane proton channel, linked together by a central stalk and a peripheral stalk. During catalysis, ATP synthesis in the catalytic domain of F(1) is coupled via a rotary mechanism of the central stalk subunits to proton translocation. Functionally, component of the F(0) channel, it forms part of the peripheral stalk, linking F(1) to F(0). The b'-subunit is a diverged and duplicated form of b found in plants and photosynthetic bacteria. The sequence is that of ATP synthase subunit b' from Prochlorococcus marinus (strain MIT 9303).